Consider the following 173-residue polypeptide: Photosystem I assembly protein Ycf3 (173 aa).

TPR repeat units lie at residues 35 to 68, 72 to 105, and 120 to 153; these read AYIYYREGFAAQNNGDYSEALENYEESLKLEENP, GETLKNMAIIYMSNGDEDRALETYVKALDQNPKQ, and GRSAQQRGLQDESDIWFDKAADVWTKAVRLYPGG.

Belongs to the Ycf3 family.

It is found in the cellular thylakoid membrane. In terms of biological role, essential for the assembly of the photosystem I (PSI) complex. May act as a chaperone-like factor to guide the assembly of the PSI subunits. This Prochlorococcus marinus (strain MIT 9211) protein is Photosystem I assembly protein Ycf3.